Consider the following 707-residue polypeptide: UvrABC system protein C (707 aa).

One can recognise a GIY-YIG domain in the interval 14–94; the sequence is AEPGCYLMKD…IKKHRPRFNV (81 aa). Residues 206–241 enclose the UVR domain; it reads GELVERLRGRMAGAAEGLRFEEAARLRDQLQAVERS. The segment at 655 to 707 is disordered; it reads DAPPIAADEPSGAPAGAPGGGPAEASPEAVAAATEAEIDAALADEDASPEPAA. Composition is skewed to low complexity over residues 660 to 670 and 677 to 689; these read AADEPSGAPAG and AEAS…AATE. A compositionally biased stretch (acidic residues) spans 690-707; it reads AEIDAALADEDASPEPAA.

The protein belongs to the UvrC family. In terms of assembly, interacts with UvrB in an incision complex.

It localises to the cytoplasm. In terms of biological role, the UvrABC repair system catalyzes the recognition and processing of DNA lesions. UvrC both incises the 5' and 3' sides of the lesion. The N-terminal half is responsible for the 3' incision and the C-terminal half is responsible for the 5' incision. The protein is UvrABC system protein C of Anaeromyxobacter dehalogenans (strain 2CP-1 / ATCC BAA-258).